The sequence spans 195 residues: NADH dehydrogenase [ubiquinone] iron-sulfur protein 3 (195 aa).

Belongs to the complex I 30 kDa subunit family. As to quaternary structure, complex I is composed of about 45 different subunits. This is a component of the iron-sulfur (IP) fragment of the enzyme.

The protein localises to the mitochondrion inner membrane. The enzyme catalyses a ubiquinone + NADH + 5 H(+)(in) = a ubiquinol + NAD(+) + 4 H(+)(out). Functionally, core subunit of the mitochondrial membrane respiratory chain NADH dehydrogenase (Complex I) that is believed to belong to the minimal assembly required for catalysis. Complex I functions in the transfer of electrons from NADH to the respiratory chain. The immediate electron acceptor for the enzyme is believed to be ubiquinone. The sequence is that of NADH dehydrogenase [ubiquinone] iron-sulfur protein 3 (NAD9) from Marchantia polymorpha (Common liverwort).